The sequence spans 896 residues: Desmocollin-3 (896 aa).

Residues 1-27 form the signal peptide; the sequence is MAAAGPRRSVRGAVCLHLLLTLVIFSR. A propeptide spanning residues 28-135 is cleaved from the precursor; the sequence is AGEACKKVIL…RETVLRRAKR (108 aa). Cadherin domains follow at residues 136–243, 244–355, 356–471, 472–579, and 580–690; these read RWAP…HPVF, TEAI…APTF, RQNA…GPEC, TPAA…EILQ, and EYVV…ILGK. Residues 136–690 are Extracellular-facing; that stretch reads RWAPIPCSMQ…SRSTGVILGK (555 aa). A glycan (N-linked (GlcNAc...) asparagine) is linked at N166. Residues N392, N546, and N629 are each glycosylated (N-linked (GlcNAc...) asparagine). Residues 691–711 form a helical membrane-spanning segment; sequence WAILAILLGIALLFSVLLTLV. Over 712–896 the chain is Cytoplasmic; it reads CGVFGATKGK…ITLAEACTKR (185 aa).

As to quaternary structure, may form homodimers. Interacts with DSG1; there is evidence to suggest that the interaction promotes cell-cell adhesion of keratinocytes. Expressed throughout the basal and spinous layer of the epidermis with weak expression in the granular layer (at protein level). Also expressed in the buccal mucosa, esophagus and cervix (at protein level).

Its subcellular location is the cell membrane. It localises to the cell junction. It is found in the desmosome. The protein localises to the cytoplasm. Functionally, a component of desmosome cell-cell junctions which are required for positive regulation of cellular adhesion. Required for cell-cell adhesion in the epidermis, as a result required for the maintenance of the dermal cohesion and the dermal barrier function. Required for cell-cell adhesion of epithelial cell layers surrounding the telogen hair club, as a result plays an important role in telogen hair shaft anchorage. Essential for successful completion of embryo compaction and embryo development. This chain is Desmocollin-3 (DSC3), found in Homo sapiens (Human).